The primary structure comprises 339 residues: Neutrophil cytosol factor 4 (339 aa).

A PX domain is found at Asp-19–Ala-140. Residues Arg-58–Arg-60 and Lys-92–Tyr-94 contribute to the a 1,2-diacyl-sn-glycero-3-phospho-(1D-myo-inositol-3-phosphate) site. Position 154 is a phosphothreonine (Thr-154). The SH3 domain occupies Met-170–Asp-229. The PB1 domain occupies Thr-237–Lys-329. Ser-315 carries the phosphoserine modification.

Component of the phagocyte NADPH oxidase complex composed of an obligatory core heterodimer formed by the membrane proteins CYBA and CYBB and the cytosolic regulatory subunits NCF1/p47-phox, NCF2/p67-phox, NCF4/p40-phox and the small GTPase RAC1 or RAC2. Part of a cytosolic complex composed at least by NCF1, NCF2 and NCF4. Interacts with NCF2. Interacts with NCF1. The NCF2-NCF4 complex interacts with GBP7 (via GB1/RHD3-type G domain).

It is found in the cytoplasm. It localises to the cytosol. Its subcellular location is the endosome membrane. The protein localises to the membrane. Its function is as follows. Subunit of the phagocyte NADPH oxidase complex that mediates the transfer of electrons from cytosolic NADPH to O2 to produce the superoxide anion (O2(-)). In the activated complex, electrons are first transferred from NADPH to flavin adenine dinucleotide (FAD) and subsequently transferred via two heme molecules to molecular oxygen, producing superoxide through an outer-sphere reaction. Activation of the NADPH oxidase complex is initiated by the assembly of cytosolic subunits of the NADPH oxidase complex with the core NADPH oxidase complex to form a complex at the plasma membrane or phagosomal membrane. This activation process is initiated by phosphorylation dependent binding of the cytosolic NCF1/p47-phox subunit to the C-terminus of CYBA/p22-phox. This chain is Neutrophil cytosol factor 4, found in Mus musculus (Mouse).